The primary structure comprises 40 residues: Large ribosomal subunit protein bL33c (40 aa).

The protein belongs to the bacterial ribosomal protein bL33 family.

The protein resides in the plastid. It localises to the chloroplast. The polypeptide is Large ribosomal subunit protein bL33c (rpl33) (Pisum sativum (Garden pea)).